Consider the following 347-residue polypeptide: SUMO-activating enzyme subunit 1 (347 aa).

It belongs to the ubiquitin-activating E1 family. Heterodimer of sae1 and uba2/sae2. The heterodimer corresponds to the two domains that are encoded on a single polypeptide chain in ubiquitin-activating enzyme E1. Interacts with ube2i.

It localises to the nucleus. Its pathway is protein modification; protein sumoylation. In terms of biological role, the heterodimer acts as an E1 ligase for sumo1, sumo2, and sumo3. It mediates ATP-dependent activation of sumo proteins followed by formation of a thioester bond between a sumo protein and a conserved active site cysteine residue on uba2/sae2. In Xenopus tropicalis (Western clawed frog), this protein is SUMO-activating enzyme subunit 1 (sae1).